The primary structure comprises 79 residues: Defensin-like protein 117 (79 aa).

Residues 1-24 form the signal peptide; the sequence is MTTTKTMLVAFVLTLFFVISSVHC. 4 disulfides stabilise this stretch: Cys-40-Cys-75, Cys-46-Cys-68, Cys-53-Cys-73, and Cys-57-Cys-74.

Belongs to the DEFL family.

The protein localises to the secreted. This is Defensin-like protein 117 from Arabidopsis thaliana (Mouse-ear cress).